Consider the following 957-residue polypeptide: Glycine dehydrogenase (decarboxylating) (957 aa).

The residue at position 708 (Lys-708) is an N6-(pyridoxal phosphate)lysine.

The protein belongs to the GcvP family. As to quaternary structure, the glycine cleavage system is composed of four proteins: P, T, L and H. It depends on pyridoxal 5'-phosphate as a cofactor.

The catalysed reaction is N(6)-[(R)-lipoyl]-L-lysyl-[glycine-cleavage complex H protein] + glycine + H(+) = N(6)-[(R)-S(8)-aminomethyldihydrolipoyl]-L-lysyl-[glycine-cleavage complex H protein] + CO2. The glycine cleavage system catalyzes the degradation of glycine. The P protein binds the alpha-amino group of glycine through its pyridoxal phosphate cofactor; CO(2) is released and the remaining methylamine moiety is then transferred to the lipoamide cofactor of the H protein. This is Glycine dehydrogenase (decarboxylating) from Shigella boydii serotype 4 (strain Sb227).